A 1225-amino-acid chain; its full sequence is ATP-dependent helicase/nuclease subunit A (1225 aa).

The UvrD-like helicase ATP-binding domain occupies 11 to 478 (AQWTDAQWKS…IDLSKNFRSR (468 aa)). Residue 32–39 (AAAGSGKT) coordinates ATP. One can recognise a UvrD-like helicase C-terminal domain in the interval 479 to 790 (KEVLATTNYL…RMMTVHSSKG (312 aa)). Residues 999–1014 (EKPSKQSVSELKRQLE) show a composition bias toward basic and acidic residues. Residues 999–1018 (EKPSKQSVSELKRQLETEES) are disordered.

Belongs to the helicase family. AddA subfamily. As to quaternary structure, heterodimer of AddA and AddB/RexB. Mg(2+) is required as a cofactor.

The enzyme catalyses Couples ATP hydrolysis with the unwinding of duplex DNA by translocating in the 3'-5' direction.. It carries out the reaction ATP + H2O = ADP + phosphate + H(+). Its function is as follows. The heterodimer acts as both an ATP-dependent DNA helicase and an ATP-dependent, dual-direction single-stranded exonuclease. Recognizes the chi site generating a DNA molecule suitable for the initiation of homologous recombination. The AddA nuclease domain is required for chi fragment generation; this subunit has the helicase and 3' -&gt; 5' nuclease activities. In Staphylococcus haemolyticus (strain JCSC1435), this protein is ATP-dependent helicase/nuclease subunit A.